A 366-amino-acid polypeptide reads, in one-letter code: Leucine dehydrogenase (366 aa).

Lysine 80 is a catalytic residue. 180–186 (GVGHVAY) provides a ligand contact to NAD(+).

Belongs to the Glu/Leu/Phe/Val dehydrogenases family. Homooctamer.

It catalyses the reaction L-leucine + NAD(+) + H2O = 4-methyl-2-oxopentanoate + NH4(+) + NADH + H(+). Its pathway is amino-acid degradation; L-leucine degradation; 4-methyl-2-oxopentanoate from L-leucine (dehydrogenase route): step 1/1. With respect to regulation, inhibited by pyridoxal phosphate. Its function is as follows. Catalyzes the reversible deamination of L-leucine to 4-methyl-2-oxopentanoate. Exhibits the highest activity with L-leucine as substrate, but can also use other L-amino acids such as L-isoleucine, L-valine and L-2-aminovaleric acid. All of the oxo analogs of the amino acid substrates serve as good substrates for the reverse reaction. This is Leucine dehydrogenase (ldh) from Thermoactinomyces intermedius.